The primary structure comprises 267 residues: MRRIAVVGAAGRMGKTLIEAVQQAPGAGLTAAIDRPDSTLVGADAGELAALGRIGVPLSGDLAKVADEFDVLIDFTHPSVTLKNLAFCRKAGKAMIIGTTGFSAEEKQRLVEAGKDIPIVFAANFSIGVNLCLKLLDTAARVLGDEVDIEITEAHHRHKVDAPSGTALRMGEVVASALGRDLEKVAVYGREGQTGARDRQTIGFATIRAGDVVGDHTVLFAADGERVEITHKASSRMTFAKGAVRAAMWLDGKAPGLYDMQDVLGLH.

Residues 8-13 and Asp34 each bind NAD(+); that span reads GAAGRM. Arg35 provides a ligand contact to NADP(+). NAD(+)-binding positions include 98-100 and 122-125; these read GTT and AANF. The Proton donor/acceptor role is filled by His155. His156 provides a ligand contact to (S)-2,3,4,5-tetrahydrodipicolinate. The active-site Proton donor is Lys159. 165–166 is a binding site for (S)-2,3,4,5-tetrahydrodipicolinate; that stretch reads GT.

Belongs to the DapB family.

It is found in the cytoplasm. The catalysed reaction is (S)-2,3,4,5-tetrahydrodipicolinate + NAD(+) + H2O = (2S,4S)-4-hydroxy-2,3,4,5-tetrahydrodipicolinate + NADH + H(+). It carries out the reaction (S)-2,3,4,5-tetrahydrodipicolinate + NADP(+) + H2O = (2S,4S)-4-hydroxy-2,3,4,5-tetrahydrodipicolinate + NADPH + H(+). It participates in amino-acid biosynthesis; L-lysine biosynthesis via DAP pathway; (S)-tetrahydrodipicolinate from L-aspartate: step 4/4. Functionally, catalyzes the conversion of 4-hydroxy-tetrahydrodipicolinate (HTPA) to tetrahydrodipicolinate. This Pseudomonas amygdali pv. tabaci (Pseudomonas syringae pv. tabaci) protein is 4-hydroxy-tetrahydrodipicolinate reductase.